Consider the following 646-residue polypeptide: bZIP transcription factor 39 (646 aa).

The Cytoplasmic segment spans residues 1–311; it reads MAEPALLDPT…KSKSKTKTKK (311 aa). Positions 25-172 are disordered; it reads HELPLAGGGG…GGTVCEEEED (148 aa). Residues 43–53 show a composition bias toward low complexity; the sequence is LDGLEFDLPGD. Over residues 59–69 the composition is skewed to basic and acidic residues; the sequence is FLLRSPERDDS. Over residues 71-98 the composition is skewed to low complexity; that stretch reads EGSAAGSGPTASPSSSPTTSASNSAVAN. Over residues 103 to 113 the composition is skewed to basic and acidic residues; that stretch reads EVKHEESDEGR. The segment covering 159 to 172 has biased composition (acidic residues); that stretch reads DSDEGGTVCEEEED. The bZIP domain occupies 172-232; it reads DERRAARLMR…AENATLRQQL (61 aa). Residues 174-205 form a basic motif region; sequence RRAARLMRNRESAQLSRQRKKRYVEELEEKVK. The interval 211 to 218 is leucine-zipper; it reads INDLNSRI. The tract at residues 272–308 is disordered; it reads LVPIPRLKPQQPVPSSKVVKKPESKKTVENKSKSKTK. Residues 279–288 show a composition bias toward low complexity; sequence KPQQPVPSSK. A compositionally biased stretch (basic and acidic residues) spans 291-303; it reads KKPESKKTVENKS. The helical transmembrane segment at 312 to 332 threads the bilayer; sequence VASVSLLGLLLIMLVFGAFIP. Topologically, residues 333 to 646 are lumenal; that stretch reads GFNHNFGMCG…FKSSSPHLVN (314 aa). Asn371, Asn399, Asn525, Asn530, Asn565, and Asn571 each carry an N-linked (GlcNAc...) asparagine glycan. The interval 560–585 is disordered; it reads TGKTANNTEPFNRTSESSSKLPDSKP. Residues 562-585 show a composition bias toward polar residues; sequence KTANNTEPFNRTSESSSKLPDSKP.

This sequence belongs to the bZIP family. As to expression, highly expressed in leaf blade, and at lower levels in roots, leaf sheaths, flowers and seeds.

Its subcellular location is the endoplasmic reticulum membrane. The protein resides in the nucleus. Functionally, transcription factor involved in endoplasmic reticulum (ER) stress response. Acts as a ER stress sensor and activates the transcription factor BZIP50 and the chaperone BIP1. This chain is bZIP transcription factor 39, found in Oryza sativa subsp. japonica (Rice).